A 138-amino-acid polypeptide reads, in one-letter code: Putative pre-16S rRNA nuclease (138 aa).

It belongs to the YqgF nuclease family.

The protein resides in the cytoplasm. Could be a nuclease involved in processing of the 5'-end of pre-16S rRNA. The sequence is that of Putative pre-16S rRNA nuclease from Enterobacter sp. (strain 638).